Here is a 1333-residue protein sequence, read N- to C-terminus: Elongator complex protein 1 (1333 aa).

3 positions are modified to phosphoserine: Ser-805, Ser-1172, and Ser-1175. The mediates dimerization stretch occupies residues 886–1333 (VDVNELFNHS…RSQWKLSLLE (448 aa)). Residues 1175 to 1209 (SGSEMSGRYSHSNSRISARSSKNRRKAERKKHSLK) are disordered. Residues 1192 to 1210 (ARSSKNRRKAERKKHSLKE) form a required for binding to tRNA region. A compositionally biased stretch (basic residues) spans 1195–1207 (SKNRRKAERKKHS).

It belongs to the ELP1/IKA1 family. As to quaternary structure, homodimer; dimerization promotes ELP1 stability and elongator complex formation. Component of the elongator complex which consists of ELP1, ELP2, ELP3, ELP4, ELP5 and ELP6. Interacts preferentially with MAP3K14/NIK followed by IKK-alpha and IKK-beta. In terms of processing, phosphorylated. In terms of tissue distribution, in the testis, expression is restricted to germ cells during spermatogenesis with no expression detected in somatic cells such as Sertoli cells or Leydig cells (at protein level). In the ovary, expressed in oocytes of primary, secondary and antral follicles (at protein level). Widely expressed in adult tissues with highest levels in brain and also expressed at all embryonic stages.

The protein localises to the cytoplasm. Its subcellular location is the nucleus. It functions in the pathway tRNA modification; 5-methoxycarbonylmethyl-2-thiouridine-tRNA biosynthesis. Its function is as follows. Component of the elongator complex which is required for multiple tRNA modifications, including mcm5U (5-methoxycarbonylmethyl uridine), mcm5s2U (5-methoxycarbonylmethyl-2-thiouridine), and ncm5U (5-carbamoylmethyl uridine). The elongator complex catalyzes the formation of carboxymethyluridine in the wobble base at position 34 in tRNAs. Regulates the migration and branching of projection neurons in the developing cerebral cortex, through a process depending on alpha-tubulin acetylation. ELP1 binds to tRNA, mediating interaction of the elongator complex with tRNA. May act as a scaffold protein that assembles active IKK-MAP3K14 complexes (IKKA, IKKB and MAP3K14/NIK). The polypeptide is Elongator complex protein 1 (Elp1) (Mus musculus (Mouse)).